The sequence spans 527 residues: MDTAVNESLSISYNLEQFLIVLSVSLSIATLSKTVPILRKIPYTLLLVIVGMALAFVDVKLINLSPELIMEIFLPPLLFEAAWNLQWRNLKENWFPITLFATLGVVICVVGIAFPLSYWGGMELAIAFLAAAALSATDPVSVIALFKELGASKKLNTLMEGESLFNDGVAVVVFLILVGIPLGTSTFDLSVTLARFVTVIGIGVGCGLVIGFSLSLLTQRFDLPFVEQSLTLVSAYGAYILAENLGGSGVIGVVVVGMVLGNYGSRIGMNPRTRLIVSIFWEFVAFFVNSIIFLLIGDQIGLSSLSDHLNLILIAIAAVVVTRLVSVFGLSLISNKVSDQISSTHITLQEQTVLWWGGLRGSVAIAVALSVPQAIAERQAIIDIVFGVVLFTLLVQGLTTQFVLKGLDLIGDQPQRLEYAELVSRQIALRRVLAELEKTDEFPDINPERLRYKQELVQGQLQSVTDKLKLLLQEYPLLQEVANKKFDQTVLDIEAETYADLIRMGRLEENIMPLLVTLEGENVAEPS.

The next 11 membrane-spanning stretches (helical) occupy residues 18-38, 41-61, 94-114, 126-146, 169-189, 196-216, 240-260, 276-296, 311-331, 352-372, and 380-400; these read FLIV…VPIL, IPYT…DVKL, WFPI…GIAF, IAFL…IALF, VAVV…TFDL, FVTV…SLSL, ILAE…GMVL, IVSI…FLLI, LILI…FGLS, TVLW…LSVP, and AIID…GLTT.

The protein belongs to the monovalent cation:proton antiporter 1 (CPA1) transporter (TC 2.A.36) family.

The protein resides in the cell membrane. Na(+)/H(+) antiporter that extrudes sodium in exchange for external protons. Might be able to function at relatively high concentrations of Na(+) ions. Also has Li(+)/H(+) antiport activity under K(+)-rich conditions, but it might not have any physiological relevance. In Synechocystis sp. (strain ATCC 27184 / PCC 6803 / Kazusa), this protein is Low-affinity Na(+)/H(+) antiporter NhaS1 (nhaS1).